The following is a 573-amino-acid chain: MLO-like protein 2 (573 aa).

Over 1–15 the chain is Extracellular; the sequence is MADQVKERTLEETST. A helical membrane pass occupies residues 16 to 36; sequence WAVAVVCFVLLFISIVLEHSI. Residues 37 to 61 are Cytoplasmic-facing; sequence HKIGTWFKKKHKQALFEALEKVKAE. The chain crosses the membrane as a helical span at residues 62 to 82; the sequence is LMLLGFISLLLTIGQTPISNI. The Extracellular segment spans residues 83–164; it reads CISQKVASTM…VSAYGIHQLH (82 aa). Residues 165 to 185 traverse the membrane as a helical segment; sequence IFIFVLAVVHVVYCIVTYAFG. The Cytoplasmic portion of the chain corresponds to 186–287; that stretch reads KIKMRTWKSW…KYIQRSLEKD (102 aa). A helical transmembrane segment spans residues 288 to 308; the sequence is FKTVVEISPVIWFVAVLFLLT. The Extracellular portion of the chain corresponds to 309-317; sequence NSYGLRSYL. Residues 318-338 traverse the membrane as a helical segment; it reads WLPFIPLVVILIVGTKLEVII. Residues 339–371 lie on the Cytoplasmic side of the membrane; it reads TKLGLRIQEKGDVVRGAPVVQPGDDLFWFGKPR. The helical transmembrane segment at 372-392 threads the bilayer; that stretch reads FILFLIHLVLFTNAFQLAFFA. Over 393-415 the chain is Extracellular; that stretch reads WSTYEFNLNNCFHESTADVVIRL. Residues 416-436 traverse the membrane as a helical segment; it reads VVGAVVQILCSYVTLPLYALV. Topologically, residues 437–573 are cytoplasmic; the sequence is TQMGSKMKPT…KSLRDFSFKK (137 aa). Residues 450–471 are calmodulin-binding; sequence DRVATALKKWHHTAKNETKHGR. The tract at residues 462-573 is disordered; that stretch reads TAKNETKHGR…KSLRDFSFKK (112 aa). 2 stretches are compositionally biased toward polar residues: residues 473 to 490 and 498 to 513; these read SGSNTPFSSRPTTPTHGS and NFNNRSVENYPSSPSP. Position 512 is a phosphoserine (Ser512). Basic and acidic residues predominate over residues 522–548; sequence EHQFWDPESQHQEAETSTHHSLAHESS.

It belongs to the MLO family.

It is found in the membrane. In terms of biological role, may be involved in modulation of pathogen defense and leaf cell death. Activity seems to be regulated by Ca(2+)-dependent calmodulin binding and seems not to require heterotrimeric G proteins. The chain is MLO-like protein 2 (MLO2) from Arabidopsis thaliana (Mouse-ear cress).